The following is a 39-amino-acid chain: Photosystem II reaction center protein L (39 aa).

Residues 18–38 (SLYLGLLLVFVLGILFSSYFF) traverse the membrane as a helical segment.

This sequence belongs to the PsbL family. As to quaternary structure, PSII is composed of 1 copy each of membrane proteins PsbA, PsbB, PsbC, PsbD, PsbE, PsbF, PsbH, PsbI, PsbJ, PsbK, PsbL, PsbM, PsbT, PsbX, PsbY, PsbZ, Psb30/Ycf12, peripheral proteins PsbO, CyanoQ (PsbQ), PsbU, PsbV and a large number of cofactors. It forms dimeric complexes.

The protein resides in the cellular thylakoid membrane. Functionally, one of the components of the core complex of photosystem II (PSII). PSII is a light-driven water:plastoquinone oxidoreductase that uses light energy to abstract electrons from H(2)O, generating O(2) and a proton gradient subsequently used for ATP formation. It consists of a core antenna complex that captures photons, and an electron transfer chain that converts photonic excitation into a charge separation. This subunit is found at the monomer-monomer interface and is required for correct PSII assembly and/or dimerization. The chain is Photosystem II reaction center protein L from Trichormus variabilis (strain ATCC 29413 / PCC 7937) (Anabaena variabilis).